A 94-amino-acid chain; its full sequence is Integration host factor subunit beta (94 aa).

It belongs to the bacterial histone-like protein family. As to quaternary structure, heterodimer of an alpha and a beta chain.

Its function is as follows. This protein is one of the two subunits of integration host factor, a specific DNA-binding protein that functions in genetic recombination as well as in transcriptional and translational control. This chain is Integration host factor subunit beta, found in Vibrio campbellii (strain ATCC BAA-1116).